Consider the following 189-residue polypeptide: MERSHLYLPTLSYAAMGHVYAPYRGSSSPALSTASSTSSKPEQIEELVSQQLHHLKMHYADEEQRYVDQMLLENPIVVERRAPPPLKTELAMDCRGSGSGSGSGSGSDVKDAQRQRAESCRKSRYNNKIKKAKLRFRHKFVSGQLKKSAVMLDTMRDVIAQAERQLLERGYPAATLERMRATFGLEMEQ.

Residues 93–124 form a disordered region; sequence DCRGSGSGSGSGSGSDVKDAQRQRAESCRKSR. Over residues 108–121 the composition is skewed to basic and acidic residues; the sequence is DVKDAQRQRAESCR.

As to quaternary structure, homodimer. Interacts with dpn (via bHLH motif). Interacts with da (via bHLH motif). Interacts with Bap60. In terms of tissue distribution, localizes to all the embryonic nuclei until nuclear cycle 9, when expression ceases in the prepole cell nuclei. Associates with the somatic nuclei through cycle 10. By nuclear cycle 12, distributes uniformly in the somatic portion of the embryo and no longer associates with the nuclei. After early cycle 14 (beginning of cellularization) there is very little or no expression in the periphery of the embryo or in either the somatic or germ cells. In the yolk, accumulates at the nuclei from nuclear cycle 8 until 10-11 hours after fertilization.

It is found in the nucleus. Involved in sex determination and dosage compensation. Required for proper expression of Sxl in embryonic somatic cells. Also has an essential function in the yolk nuclei. Involved in endoderm migration and midgut formation. In Drosophila melanogaster (Fruit fly), this protein is Protein sisterless A (sisA).